A 101-amino-acid chain; its full sequence is Large ribosomal subunit protein uL23 (101 aa).

Belongs to the universal ribosomal protein uL23 family. Part of the 50S ribosomal subunit. Contacts protein L29, and trigger factor when it is bound to the ribosome.

In terms of biological role, one of the early assembly proteins it binds 23S rRNA. One of the proteins that surrounds the polypeptide exit tunnel on the outside of the ribosome. Forms the main docking site for trigger factor binding to the ribosome. This chain is Large ribosomal subunit protein uL23, found in Pseudarthrobacter chlorophenolicus (strain ATCC 700700 / DSM 12829 / CIP 107037 / JCM 12360 / KCTC 9906 / NCIMB 13794 / A6) (Arthrobacter chlorophenolicus).